The chain runs to 87 residues: Transcriptional regulator PINT87aa (87 aa).

As to quaternary structure, interacts with PAF1 complex member PAF1. Interacts with transcription factor FOXM1. In terms of tissue distribution, expressed in brain, liver, kidney and stomach with lower levels in breast, intestine, thyroid and pancreas.

Its subcellular location is the nucleus. Its function is as follows. Enhances the binding of the PAF1 complex to target gene promoters and plays a role in negative regulation of transcription. May function as an anchor to keep the PAF1 complex on target gene promoters, sequentially pausing RNA polymerase II-induced mRNA elongation. Inhibits FOXM1-mediated transcription of PHB2. In Homo sapiens (Human), this protein is Transcriptional regulator PINT87aa.